The following is a 60-amino-acid chain: 5-hydroxytryptamine receptor 2B (60 aa).

At 1 to 4 the chain is on the extracellular side; sequence VLCP. Residues 5–26 form a helical membrane-spanning segment; it reads AWLFLDVLFSTASIMHLCAISV. Asp10 and Thr15 together coordinate ergotamine. Positions 27–29 match the DRY motif; important for ligand-induced conformation changes motif; it reads DRY. Over 27–46 the chain is Cytoplasmic; the sequence is DRYIAIKKPIQANQYNSRAT. A helical transmembrane segment spans residues 47–60; that stretch reads AFIKITVVWLISIG.

The protein belongs to the G-protein coupled receptor 1 family. Interacts (via C-terminus) with MPDZ. Detected in aorta, renal artery, jugular vein, vena cava and femoral vein.

The protein localises to the cell membrane. It localises to the synapse. The protein resides in the synaptosome. Its function is as follows. G-protein coupled receptor for 5-hydroxytryptamine (serotonin). Also functions as a receptor for various ergot alkaloid derivatives and psychoactive substances. Ligand binding causes a conformation change that triggers signaling via guanine nucleotide-binding proteins (G proteins) and modulates the activity of downstream effectors. HTR2B is coupled to G(q)/G(11) G alpha proteins and activates phospholipase C-beta, releasing diacylglycerol (DAG) and inositol 1,4,5-trisphosphate (IP3) second messengers that modulate the activity of phosphatidylinositol 3-kinase and promote the release of Ca(2+) ions from intracellular stores, respectively. Beta-arrestin family members inhibit signaling via G proteins and mediate activation of alternative signaling pathways. Plays a role in the regulation of dopamine and 5-hydroxytryptamine release, 5-hydroxytryptamine uptake and in the regulation of extracellular dopamine and 5-hydroxytryptamine levels, and thereby affects neural activity. May play a role in the perception of pain. Plays a role in the regulation of behavior, including impulsive behavior. Required for normal proliferation of embryonic cardiac myocytes and normal heart development. Protects cardiomyocytes against apoptosis. Plays a role in the adaptation of pulmonary arteries to chronic hypoxia. Plays a role in vasoconstriction. Required for normal osteoblast function and proliferation, and for maintaining normal bone density. Required for normal proliferation of the interstitial cells of Cajal in the intestine. This is 5-hydroxytryptamine receptor 2B (HTR2B) from Sus scrofa (Pig).